We begin with the raw amino-acid sequence, 65 residues long: Beta-defensin 17 (65 aa).

Residues methionine 1–glycine 19 form the signal peptide. 3 disulfides stabilise this stretch: cysteine 35-cysteine 63, cysteine 42-cysteine 56, and cysteine 46-cysteine 64.

The protein belongs to the beta-defensin family.

The protein localises to the secreted. Its function is as follows. Has antibacterial activity. In Rattus norvegicus (Rat), this protein is Beta-defensin 17 (Defb17).